We begin with the raw amino-acid sequence, 141 residues long: MAKKVTAVIKLALQAGKANPAPPVGPALGQHGVNIMAFCKEYNARTQDKAGFVIPVEISVFEDRSFTFITKTPPASVLIVKAAGIEKGSGESAKGSVGSITRAQLEEIANTKLPDLNCSSVESAMRIIEGTARNMGVAVKD.

It belongs to the universal ribosomal protein uL11 family. In terms of assembly, part of the ribosomal stalk of the 50S ribosomal subunit. Interacts with L10 and the large rRNA to form the base of the stalk. L10 forms an elongated spine to which L12 dimers bind in a sequential fashion forming a multimeric L10(L12)X complex. Post-translationally, one or more lysine residues are methylated.

Its function is as follows. Forms part of the ribosomal stalk which helps the ribosome interact with GTP-bound translation factors. This Synechococcus sp. (strain RCC307) protein is Large ribosomal subunit protein uL11.